Here is a 360-residue protein sequence, read N- to C-terminus: 45 kDa calcium-binding protein (360 aa).

A signal peptide spans 1-29 (MVSKQAFLFSLGSLYLSLLFIFLLMDVYA). An N-linked (GlcNAc...) asparagine glycan is attached at Asn-33. EF-hand domains lie at 96 to 131 (RNRR…KTEE), 135 to 170 (EAVN…SKGF), 231 to 266 (MLKF…TVEN), 276 to 311 (WVRD…MNEY), and 312 to 347 (NALN…FTGS). Positions 109, 111, 113, 115, 120, 148, 150, 152, 154, 159, 244, 246, 248, 250, 255, 289, 291, 293, 300, 325, 327, 329, and 336 each coordinate Ca(2+).

The protein belongs to the CREC family.

The protein resides in the golgi apparatus lumen. Functionally, may regulate calcium-dependent activities in the endoplasmic reticulum lumen or post-ER compartment. The sequence is that of 45 kDa calcium-binding protein (sdf4) from Xenopus laevis (African clawed frog).